Here is a 31-residue protein sequence, read N- to C-terminus: Photosystem II reaction center protein T (31 aa).

The helical transmembrane segment at 3–23 (AFTYTLLMTLGVVTLFFAVAF) threads the bilayer.

Belongs to the PsbT family. As to quaternary structure, PSII is composed of 1 copy each of membrane proteins PsbA, PsbB, PsbC, PsbD, PsbE, PsbF, PsbH, PsbI, PsbJ, PsbK, PsbL, PsbM, PsbT, PsbX, PsbY, Psb30/Ycf12, peripheral proteins PsbO, CyanoQ (PsbQ), PsbU, PsbV and a large number of cofactors. It forms dimeric complexes.

The protein localises to the cellular thylakoid membrane. Functionally, found at the monomer-monomer interface of the photosystem II (PS II) dimer, plays a role in assembly and dimerization of PSII. PSII is a light-driven water plastoquinone oxidoreductase, using light energy to abstract electrons from H(2)O, generating a proton gradient subsequently used for ATP formation. In Prochlorococcus marinus (strain SARG / CCMP1375 / SS120), this protein is Photosystem II reaction center protein T.